Here is a 1133-residue protein sequence, read N- to C-terminus: Probable cation-transporting ATPase 9 (1133 aa).

Topologically, residues 1-6 are cytoplasmic; the sequence is MRVSSI. Residues 7–28 form a helical membrane-spanning segment; that stretch reads EAEMENPIDVDKTDVEGELKIK. Topologically, residues 29-34 are extracellular; that stretch reads QVTLLR. The chain crosses the membrane as a helical span at residues 35–53; sequence ENIVKKIVFFLVAIFCSDR. The Cytoplasmic portion of the chain corresponds to 54–167; the sequence is PSVLKKVFYE…IEINVPSFLT (114 aa). The helical transmembrane segment at 168–190 threads the bilayer; sequence LMWREFKKPINFLLYFGIIVWGI. At 191–193 the chain is on the extracellular side; it reads EQM. The helical transmembrane segment at 194 to 212 threads the bilayer; sequence YVSTAITVVFTTTINSLIC. Residues 213-363 lie on the Cytoplasmic side of the membrane; it reads IYIRGVMQKL…PFNKKFQQQA (151 aa). Residues 364 to 383 traverse the membrane as a helical segment; the sequence is VKLTILMATLLLIGFLSTLS. The Extracellular portion of the chain corresponds to 384–396; it reads RLLDIELPPLFIA. Residues 397–418 form a helical membrane-spanning segment; it reads FRFLDILIYSAPPGMPMLIAIT. Over 419-887 the chain is Cytoplasmic; sequence NFVGLKRLKN…NSVEIFKGYL (469 aa). Asp451 acts as the 4-aspartylphosphate intermediate in catalysis. Residues Asp827 and Asp831 each coordinate Mg(2+). Residues 888-906 traverse the membrane as a helical segment; that stretch reads QVALLRYLGFLTLAYFYSS. At 907-915 the chain is on the extracellular side; the sequence is YSSGQMDWQ. Residues 916–931 form a helical membrane-spanning segment; it reads ALASGYFLVYLILGCN. Topologically, residues 932–948 are cytoplasmic; that stretch reads TPLKKLEKSVFDDNLFS. The helical transmembrane segment at 949–972 threads the bilayer; it reads IYNVTSVLFGFTLHILSIVGCVES. The Extracellular portion of the chain corresponds to 973–994; it reads LHASPIYKEVNSLDAENNFQFE. Residues 995-1018 form a helical membrane-spanning segment; it reads TQHNTVLNFNILINFFYVIISNHI. Topologically, residues 1019–1030 are cytoplasmic; sequence GKPMKDRYYKNT. A helical membrane pass occupies residues 1031-1050; that stretch reads IAIYYDLGLIYTCKCMILQV. Residues 1051 to 1101 lie on the Extracellular side of the membrane; the sequence is LLILEHTHHGLIFLILLLDQEFSSSLTVQVYFSLPMNLFLPEEFSLNFTQE. The chain crosses the membrane as a helical span at residues 1102–1124; that stretch reads VKKEKELLICNSSSTILEVDYNL. Over 1125–1133 the chain is Cytoplasmic; it reads RLNYFQQNF.

The protein belongs to the cation transport ATPase (P-type) (TC 3.A.3) family. Type V subfamily.

Its subcellular location is the membrane. It catalyses the reaction ATP + H2O = ADP + phosphate + H(+). In Tetrahymena thermophila, this protein is Probable cation-transporting ATPase 9 (TPA9).